A 77-amino-acid chain; its full sequence is Probable [Fe-S]-dependent transcriptional repressor (77 aa).

Iron-sulfur cluster is bound by residues cysteine 54, cysteine 59, cysteine 62, and cysteine 68.

This sequence belongs to the FeoC family.

In terms of biological role, may function as a transcriptional regulator that controls feoABC expression. The sequence is that of Probable [Fe-S]-dependent transcriptional repressor from Proteus mirabilis (strain HI4320).